Here is a 305-residue protein sequence, read N- to C-terminus: MGLQPSPVLLASLGVGLLTLLGVALGAYLVRRSRRPPVTLLDPNEKYQLRLLDKTTVNHNTKRFRFALPTAHHVLGLPVGKHVYLSARIDGSLVIRPYTPVTSDEDQGYVDLVIKVYLKGVHPKFPEGGKMSQYLDSLKIGDVVEFRGPSGLLTYAGKGKFNIQPNKKAPPEARVARNLGMIAGGTGITPMLQLIRAILKDPEDPTQCFLLFANQTEKDIILREDLEELQARHPGRFKLWFTLDHPPEGWAYSKGFVSVDMIREHLPAPGEDVLLLLCGPPPMVQLACHPSLDKLGYSPKMRFTY.

Residues 8–28 form a helical membrane-spanning segment; it reads VLLASLGVGLLTLLGVALGAY. Residues 44 to 156 enclose the FAD-binding FR-type domain; sequence NEKYQLRLLD…RGPSGLLTYA (113 aa). FAD is bound by residues 136 to 166 and 175 to 210; these read DSLK…IQPN and VARN…QCFL.

The protein belongs to the flavoprotein pyridine nucleotide cytochrome reductase family. It depends on FAD as a cofactor.

The protein resides in the membrane. It carries out the reaction 2 Fe(III)-[cytochrome b5] + NADH = 2 Fe(II)-[cytochrome b5] + NAD(+) + H(+). Functionally, NADH-cytochrome b5 reductases are involved in desaturation and elongation of fatty acids, cholesterol biosynthesis, drug metabolism, and, in erythrocyte, methemoglobin reduction. The polypeptide is NADH-cytochrome b5 reductase 1 (CYB5R1) (Bos taurus (Bovine)).